The chain runs to 376 residues: Probable dual-specificity RNA methyltransferase RlmN (376 aa).

The Proton acceptor role is filled by Glu96. The Radical SAM core domain maps to 102-346; that stretch reads YPDRSTVCVS…CTVRVERGVE (245 aa). Cys109 and Cys351 are oxidised to a cystine. Residues Cys116, Cys120, and Cys123 each contribute to the [4Fe-4S] cluster site. S-adenosyl-L-methionine-binding positions include 171–172, Ser203, 226–228, and Asn308; these read GE and SLH. Cys351 functions as the S-methylcysteine intermediate in the catalytic mechanism.

Belongs to the radical SAM superfamily. RlmN family. It depends on [4Fe-4S] cluster as a cofactor.

It is found in the cytoplasm. The enzyme catalyses adenosine(2503) in 23S rRNA + 2 reduced [2Fe-2S]-[ferredoxin] + 2 S-adenosyl-L-methionine = 2-methyladenosine(2503) in 23S rRNA + 5'-deoxyadenosine + L-methionine + 2 oxidized [2Fe-2S]-[ferredoxin] + S-adenosyl-L-homocysteine. It carries out the reaction adenosine(37) in tRNA + 2 reduced [2Fe-2S]-[ferredoxin] + 2 S-adenosyl-L-methionine = 2-methyladenosine(37) in tRNA + 5'-deoxyadenosine + L-methionine + 2 oxidized [2Fe-2S]-[ferredoxin] + S-adenosyl-L-homocysteine. Its function is as follows. Specifically methylates position 2 of adenine 2503 in 23S rRNA and position 2 of adenine 37 in tRNAs. This is Probable dual-specificity RNA methyltransferase RlmN from Chloroflexus aurantiacus (strain ATCC 29366 / DSM 635 / J-10-fl).